A 284-amino-acid chain; its full sequence is Syntaxin-like protein psy1 (284 aa).

Residues 23-57 (EEIDHIRDAIRQIEDNVGRIEMLHQQSLQEIDEAN) adopt a coiled-coil conformation. The 63-residue stretch at 181-243 (LREVQERHAD…GEGTQHMDRA (63 aa)) folds into the t-SNARE coiled-coil homology domain. Residues 260-280 (ICVVIICVIVAVLCGVLIPVL) traverse the membrane as a helical; Anchor for type IV membrane protein segment.

The protein belongs to the syntaxin family.

The protein resides in the cell membrane. It is found in the prospore membrane. This chain is Syntaxin-like protein psy1 (psy1), found in Schizosaccharomyces pombe (strain 972 / ATCC 24843) (Fission yeast).